A 283-amino-acid chain; its full sequence is MAISAALVKELRERTGAGMMDCKKALEETNGDIELAIDNMRKSGAAKAAKKAGNIAAEGTILIKQGAGFTALLEVNCQTDFVAKDSNFLAFANQVLEVAAAGKVSVEDLKAQFEEARVALVAKIGENINVRRVEYIDGENVAAYRHGDRIGVVVTGTADEETLKHLAMHVAASKPEYVNPEDVPAEVVAKEREVQVEIAINEGKPKEIAEKMVEGRMKKFTGEVSLTGQPFIMEPKKTVGEFLKEKGATVANFIRLEVGEGIEKKEEDFAAEVAKQIAASQKA.

Residues Thr79–Val82 form an involved in Mg(2+) ion dislocation from EF-Tu region.

Belongs to the EF-Ts family.

The protein resides in the cytoplasm. Its function is as follows. Associates with the EF-Tu.GDP complex and induces the exchange of GDP to GTP. It remains bound to the aminoacyl-tRNA.EF-Tu.GTP complex up to the GTP hydrolysis stage on the ribosome. The polypeptide is Elongation factor Ts (Shewanella amazonensis (strain ATCC BAA-1098 / SB2B)).